A 452-amino-acid polypeptide reads, in one-letter code: Sodium-coupled neutral amino acid transporter 7 (452 aa).

The next 11 helical transmembrane spans lie at 46–66 (AVFIVVNAALGAGLLNFPAAF), 74–94 (AAISLQLVLLLFIISGLVILA), 120–140 (LCEVLIAVYTFGTCIAFFIII), 168–188 (FTISVTGVLLILPLSLPREIS), 195–215 (FLSVLGTCYVTVVVVVRCIWP), 234–256 (VFNAVPTICFGYQCHVSSVPVYG), 272–292 (IAMFIALCVYTGTGVCGFLLF), 309–329 (IAVAVARAFIILCVLTSYPIL), 361–381 (VLQTVIWFLLTLLLALFIPDI), 385–405 (ISLIGGLAACFIFIFPGLCLI), and 419–439 (SWWALLSYGVIMVTIGTFIFG).

It belongs to the amino acid/polyamine transporter 2 family.

It localises to the lysosome membrane. It is found in the cell projection. The protein localises to the axon. It carries out the reaction L-asparagine(in) + Na(+)(in) = L-asparagine(out) + Na(+)(out). It catalyses the reaction L-glutamine(in) + Na(+)(in) = L-glutamine(out) + Na(+)(out). Symporter that selectively cotransports sodium ions and amino acids, such as L-glutamine and L-asparagine from the lysosome into the cytoplasm and may participates in mTORC1 activation. The transport activity requires an acidic lysosomal lumen. This chain is Sodium-coupled neutral amino acid transporter 7, found in Xenopus laevis (African clawed frog).